Here is a 154-residue protein sequence, read N- to C-terminus: NADPH-dependent 7-cyano-7-deazaguanine reductase (154 aa).

The segment covering 1–21 (MPNTDVSSLSMLGQQTETAQS) has biased composition (polar residues). The interval 1–28 (MPNTDVSSLSMLGQQTETAQSPEEAVLE) is disordered. C52 (thioimide intermediate) is an active-site residue. Catalysis depends on D59, which acts as the Proton donor. Substrate is bound by residues 74 to 76 (VES) and 93 to 94 (HE).

Belongs to the GTP cyclohydrolase I family. QueF type 1 subfamily.

It localises to the cytoplasm. It catalyses the reaction 7-aminomethyl-7-carbaguanine + 2 NADP(+) = 7-cyano-7-deazaguanine + 2 NADPH + 3 H(+). The protein operates within tRNA modification; tRNA-queuosine biosynthesis. Catalyzes the NADPH-dependent reduction of 7-cyano-7-deazaguanine (preQ0) to 7-aminomethyl-7-deazaguanine (preQ1). The protein is NADPH-dependent 7-cyano-7-deazaguanine reductase of Rhizobium johnstonii (strain DSM 114642 / LMG 32736 / 3841) (Rhizobium leguminosarum bv. viciae).